The chain runs to 414 residues: MIEVLLVTICLAVFPYQGSSIILESGNVNDYEVVYPRKVTALPKGAVQPKYEDAMQYELKVNGEPVVLHLEKNKELFSKDYSETHYSPDGRKITTNPSVEDHCYYRGRIENDADSTASISACNGLKGHFKLQGEMYLIEPLVLSDSEAHAVFKLENVEKEDGGPKMCGVTQNWESYEPIKKASDLNFNSDQQRFAKRYVELVIVADHRMFMKYKSDLFSICSRVHDIVNFINWFYRSLNIRVSLTDLGIWSDQDYITVQSSAENTLHSFGEWGKSVLLKQKRHDNAQLLTAIVLDEDTLGLAYLSSMCNPWTSVEIIQDHSPINLLMGVTMAHELGHNLGMKHDEKDCLRGATLCIMRPGLTPGRSYEFSDDSMGYYQSFLDQYKPQCILNKPLRIDPVSTPVSGNELLEAGEE.

The first 20 residues, 1-20 (MIEVLLVTICLAVFPYQGSS), serve as a signal peptide directing secretion. The propeptide occupies 21 to 190 (IILESGNVND…KASDLNFNSD (170 aa)). The residue at position 191 (Gln191) is a Pyrrolidone carboxylic acid. Residues 197 to 393 (RYVELVIVAD…YKPQCILNKP (197 aa)) form the Peptidase M12B domain. Ca(2+) is bound by residues Glu200 and Asp284. Cystine bridges form between Cys308-Cys388 and Cys348-Cys355. His333 is a binding site for Zn(2+). Residue Glu334 is part of the active site. Zn(2+) is bound by residues His337 and His343. Ca(2+) is bound by residues Cys388 and Asn391. Positions 394 to 414 (LRIDPVSTPVSGNELLEAGEE) are excised as a propeptide.

It belongs to the venom metalloproteinase (M12B) family. P-I subfamily. As to quaternary structure, monomer. The cofactor is Zn(2+). Expressed by the venom gland.

Its subcellular location is the secreted. Snake venom metalloproteinase that impairs hemostasis in the envenomed animal. The sequence is that of Snake venom metalloproteinase from Crotalus molossus molossus (Northern black-tailed rattlesnake).